Here is a 265-residue protein sequence, read N- to C-terminus: Mlc titration factor A (265 aa).

Histidine 111, histidine 148, histidine 152, and glutamate 211 together coordinate Zn(2+).

Belongs to the MtfA family. As to quaternary structure, interacts with Mlc. Zn(2+) is required as a cofactor.

Its subcellular location is the cytoplasm. In terms of biological role, involved in the modulation of the activity of the glucose-phosphotransferase system (glucose-PTS). Interacts with the transcriptional repressor Mlc, preventing its interaction with DNA and leading to the modulation of expression of genes regulated by Mlc, including ptsG, which encodes the PTS system glucose-specific EIICB component. Shows zinc-dependent metallopeptidase activity. In Escherichia coli O17:K52:H18 (strain UMN026 / ExPEC), this protein is Mlc titration factor A.